We begin with the raw amino-acid sequence, 718 residues long: Sodium/myo-inositol cotransporter (718 aa).

Over 1–9 (MRAVLETAD) the chain is Extracellular. Residues 10–29 (IAIVALYFILVMCIGFFAMW) traverse the membrane as a helical segment. At 30-38 (KSNRSTVSG) the chain is on the cytoplasmic side. The chain crosses the membrane as a helical span at residues 39–57 (YFLAGRSMTWVAIGASLFV). Over 58-86 (SNIGSEHFIGLAGSGAASGFAVGAWEFNA) the chain is Extracellular. Residues 87 to 110 (LLLLQLLGWVFIPIYIRSGVYTMP) form a helical membrane-spanning segment. Topologically, residues 111-123 (EYLSKRFGGHRIQ) are cytoplasmic. Residues 124-144 (VYFAALSLILYIFTKLSVDLY) form a helical membrane-spanning segment. Topologically, residues 145 to 157 (SGALFIQESMGWN) are extracellular. Residues 158–183 (LYVSVILLIGMTALLTVTGGLVAVIY) form a helical membrane-spanning segment. Residues 184–186 (TDT) lie on the Cytoplasmic side of the membrane. Residues 187-205 (LQALLMIVGALTLMVISMM) traverse the membrane as a helical segment. Topologically, residues 206 to 303 (EIGGFEEVKR…HAKGSTLMAG (98 aa)) are extracellular. Asparagine 232 carries N-linked (GlcNAc...) asparagine glycosylation. Residues 304–324 (FLKLLPMFIIVVPGMISRILF) form a helical membrane-spanning segment. The Cytoplasmic segment spans residues 325-353 (ADDIACINPEHCMQVCGSRAGCSNIAYPR). A helical membrane pass occupies residues 354-376 (LVMKLVPVGLRGLMMAVMIAALM). Residues 377-406 (SDLDSIFNSASTIFTLDVYKLIRKSASSRE) lie on the Extracellular side of the membrane. The helical transmembrane segment at 407–430 (LMIVGRIFVAFMVVISIAWVPIIV) threads the bilayer. Residues 431–443 (EMQGGQMYLYIQE) lie on the Cytoplasmic side of the membrane. The chain crosses the membrane as a helical span at residues 444 to 462 (VADYLTPPVAALFLLAIFW). The Extracellular portion of the chain corresponds to 463 to 510 (KRCNEQGAFYGGMAGFILVVVRLTLAFAYRAPECDQPDNRPVFIKDIH). Residues 511–532 (YMYVATALFWITGLITVIVSLL) form a helical membrane-spanning segment. The Cytoplasmic portion of the chain corresponds to 533–695 (TPPPTKEQIR…QMLEEPPQVK (163 aa)). Phosphoserine is present on residues serine 594 and serine 632. The chain crosses the membrane as a helical span at residues 696 to 716 (VILNIGLFGVCSLGIFMFVYF). The Extracellular portion of the chain corresponds to 717 to 718 (SL).

It belongs to the sodium:solute symporter (SSF) (TC 2.A.21) family. As to quaternary structure, interacts with KCNQ2 (via the pore module). Interacts with KCNQ1; this interaction is direct. Forms coregulatory complexes with ion channels KCNQ2-KCNQ3 and KCNQ1-KCNE2.

It localises to the apical cell membrane. The protein localises to the basolateral cell membrane. In terms of biological role, electrogenic Na(+)-coupled sugar symporter that actively transports myo-inositol and its stereoisomer scyllo-inositol across the plasma membrane, with a Na(+) to sugar coupling ratio of 2:1. Maintains myo-inositol concentration gradient that defines cell volume and fluid balance during osmotic stress, in particular in the fetoplacental unit and central nervous system. Forms coregulatory complexes with voltage-gated K(+) ion channels, allosterically altering ion selectivity, voltage dependence and gating kinetics of the channel. In turn, K(+) efflux through the channel forms a local electrical gradient that modulates electrogenic Na(+)-coupled myo-inositol influx through the transporter. Associates with KCNQ1-KCNE2 channel in the apical membrane of choroid plexus epithelium and regulates the myo-inositol gradient between blood and cerebrospinal fluid with an impact on neuron excitability. Associates with KCNQ2-KCNQ3 channel altering ion selectivity, increasing Na(+) and Cs(+) permeation relative to K(+) permeation. Provides myo-inositol precursor for biosynthesis of phosphoinositides such as PI(4,5)P2, thus indirectly affecting the activity of phosphoinositide-dependent ion channels and Ca(2+) signaling upon osmotic stress. This chain is Sodium/myo-inositol cotransporter (SLC5A3), found in Bos taurus (Bovine).